A 190-amino-acid chain; its full sequence is Xanthine phosphoribosyltransferase 2 (190 aa).

Xanthine-binding residues include Leu20 and Asn27. A 5-phospho-alpha-D-ribose 1-diphosphate-binding site is contributed by 129–133 (ANGCA). Lys157 lines the xanthine pocket.

The protein belongs to the purine/pyrimidine phosphoribosyltransferase family. Xpt subfamily. Homodimer.

The protein resides in the cytoplasm. The catalysed reaction is XMP + diphosphate = xanthine + 5-phospho-alpha-D-ribose 1-diphosphate. It functions in the pathway purine metabolism; XMP biosynthesis via salvage pathway; XMP from xanthine: step 1/1. Converts the preformed base xanthine, a product of nucleic acid breakdown, to xanthosine 5'-monophosphate (XMP), so it can be reused for RNA or DNA synthesis. This Clostridium botulinum (strain ATCC 19397 / Type A) protein is Xanthine phosphoribosyltransferase 2.